Consider the following 132-residue polypeptide: Ig kappa chain V-III region MOPC 321 (132 aa).

Residues 1–20 (METDTLLLWVLLLWVPGSTG) form the signal peptide. Residues 21 to 43 (DIVLTQSPASLAVSLGQRATISC) form a framework-1 region. Cysteine 43 and cysteine 112 form a disulfide bridge. The complementarity-determining-1 stretch occupies residues 44–58 (RASKSVNTYGNSFMZ). The interval 59-73 (WYZZKPGZPPKLLIY) is framework-2. A complementarity-determining-2 region spans residues 74–80 (RASNLZS). The framework-3 stretch occupies residues 81-112 (GIPARFSGSGSRTBFTLTIBPVZABDVATYFC). Residues 113-121 (ZZSBZBPWT) are complementarity-determining-3. The framework-4 stretch occupies residues 122–131 (FGSGTKLEIK).

The chain is Ig kappa chain V-III region MOPC 321 from Mus musculus (Mouse).